Consider the following 393-residue polypeptide: NAD(P)H-quinone oxidoreductase subunit H, chloroplastic (393 aa).

Belongs to the complex I 49 kDa subunit family. NDH is composed of at least 16 different subunits, 5 of which are encoded in the nucleus.

It localises to the plastid. The protein localises to the chloroplast thylakoid membrane. It carries out the reaction a plastoquinone + NADH + (n+1) H(+)(in) = a plastoquinol + NAD(+) + n H(+)(out). It catalyses the reaction a plastoquinone + NADPH + (n+1) H(+)(in) = a plastoquinol + NADP(+) + n H(+)(out). Functionally, NDH shuttles electrons from NAD(P)H:plastoquinone, via FMN and iron-sulfur (Fe-S) centers, to quinones in the photosynthetic chain and possibly in a chloroplast respiratory chain. The immediate electron acceptor for the enzyme in this species is believed to be plastoquinone. Couples the redox reaction to proton translocation, and thus conserves the redox energy in a proton gradient. The sequence is that of NAD(P)H-quinone oxidoreductase subunit H, chloroplastic from Amborella trichopoda.